A 65-amino-acid polypeptide reads, in one-letter code: MEKETPQQETKQSTNKESGFFDEIIKRTNQLLEKEKELHEKYNKEITSQQDQIDQLKKKINQLKY.

Positions 1–22 (MEKETPQQETKQSTNKESGFFD) are disordered. Residues 7-17 (QQETKQSTNKE) are compositionally biased toward polar residues. Residues 22-65 (DEIIKRTNQLLEKEKELHEKYNKEITSQQDQIDQLKKKINQLKY) are a coiled coil.

This is an uncharacterized protein from Dictyostelium discoideum (Social amoeba).